Consider the following 448-residue polypeptide: L-seryl-tRNA(Sec) selenium transferase (448 aa).

The residue at position 284 (lysine 284) is an N6-(pyridoxal phosphate)lysine.

The protein belongs to the SelA family. Pyridoxal 5'-phosphate serves as cofactor.

It is found in the cytoplasm. It carries out the reaction L-seryl-tRNA(Sec) + selenophosphate + H(+) = L-selenocysteinyl-tRNA(Sec) + phosphate. The protein operates within aminoacyl-tRNA biosynthesis; selenocysteinyl-tRNA(Sec) biosynthesis; selenocysteinyl-tRNA(Sec) from L-seryl-tRNA(Sec) (bacterial route): step 1/1. In terms of biological role, converts seryl-tRNA(Sec) to selenocysteinyl-tRNA(Sec) required for selenoprotein biosynthesis. The chain is L-seryl-tRNA(Sec) selenium transferase from Nautilia profundicola (strain ATCC BAA-1463 / DSM 18972 / AmH).